Reading from the N-terminus, the 122-residue chain is Large ribosomal subunit protein uL14 (122 aa).

This sequence belongs to the universal ribosomal protein uL14 family. As to quaternary structure, part of the 50S ribosomal subunit. Forms a cluster with proteins L3 and L19. In the 70S ribosome, L14 and L19 interact and together make contacts with the 16S rRNA in bridges B5 and B8.

Functionally, binds to 23S rRNA. Forms part of two intersubunit bridges in the 70S ribosome. The polypeptide is Large ribosomal subunit protein uL14 (Geobacter sulfurreducens (strain ATCC 51573 / DSM 12127 / PCA)).